Consider the following 460-residue polypeptide: Bifunctional protein GlmU (460 aa).

The pyrophosphorylase stretch occupies residues Met1 to Arg229. UDP-N-acetyl-alpha-D-glucosamine-binding positions include Leu8–Gly11, Lys22, Gln72, and Gly77–Thr78. Mg(2+) is bound at residue Asp102. Residues Gly139, Glu154, Asn169, and Asn227 each coordinate UDP-N-acetyl-alpha-D-glucosamine. Asn227 contacts Mg(2+). Residues Val230 to Asn250 form a linker region. An N-acetyltransferase region spans residues Gly251 to Lys460. UDP-N-acetyl-alpha-D-glucosamine-binding residues include Arg332 and Lys350. The active-site Proton acceptor is the His362. 2 residues coordinate UDP-N-acetyl-alpha-D-glucosamine: Tyr365 and Asn376. Residues Ala379, Asn385–Tyr386, Ser404, Ala422, and Arg439 contribute to the acetyl-CoA site.

In the N-terminal section; belongs to the N-acetylglucosamine-1-phosphate uridyltransferase family. It in the C-terminal section; belongs to the transferase hexapeptide repeat family. In terms of assembly, homotrimer. Mg(2+) is required as a cofactor.

It localises to the cytoplasm. It catalyses the reaction alpha-D-glucosamine 1-phosphate + acetyl-CoA = N-acetyl-alpha-D-glucosamine 1-phosphate + CoA + H(+). The enzyme catalyses N-acetyl-alpha-D-glucosamine 1-phosphate + UTP + H(+) = UDP-N-acetyl-alpha-D-glucosamine + diphosphate. Its pathway is nucleotide-sugar biosynthesis; UDP-N-acetyl-alpha-D-glucosamine biosynthesis; N-acetyl-alpha-D-glucosamine 1-phosphate from alpha-D-glucosamine 6-phosphate (route II): step 2/2. The protein operates within nucleotide-sugar biosynthesis; UDP-N-acetyl-alpha-D-glucosamine biosynthesis; UDP-N-acetyl-alpha-D-glucosamine from N-acetyl-alpha-D-glucosamine 1-phosphate: step 1/1. It functions in the pathway bacterial outer membrane biogenesis; LPS lipid A biosynthesis. In terms of biological role, catalyzes the last two sequential reactions in the de novo biosynthetic pathway for UDP-N-acetylglucosamine (UDP-GlcNAc). The C-terminal domain catalyzes the transfer of acetyl group from acetyl coenzyme A to glucosamine-1-phosphate (GlcN-1-P) to produce N-acetylglucosamine-1-phosphate (GlcNAc-1-P), which is converted into UDP-GlcNAc by the transfer of uridine 5-monophosphate (from uridine 5-triphosphate), a reaction catalyzed by the N-terminal domain. The polypeptide is Bifunctional protein GlmU (Streptococcus pyogenes serotype M5 (strain Manfredo)).